A 386-amino-acid polypeptide reads, in one-letter code: Protein-glutamate methylesterase/protein-glutamine glutaminase 3 (386 aa).

In terms of domain architecture, Response regulatory spans 4-121 (KVLVVDDSGF…SRNPQKVKQL (118 aa)). Asp55 is subject to 4-aspartylphosphate. Residues 132-194 (SNRRSSGFGS…SHAPAHPTTS (63 aa)) are compositionally biased toward low complexity. The tract at residues 132 to 197 (SNRRSSGFGS…PAHPTTSGTA (66 aa)) is disordered. A CheB-type methylesterase domain is found at 191 to 383 (PTTSGTAKRK…LDDIGRHLVE (193 aa)). Active-site residues include Ser210, His237, and Asp330.

This sequence belongs to the CheB family. In terms of processing, phosphorylated by CheA. Phosphorylation of the N-terminal regulatory domain activates the methylesterase activity.

Its subcellular location is the cytoplasm. The enzyme catalyses [protein]-L-glutamate 5-O-methyl ester + H2O = L-glutamyl-[protein] + methanol + H(+). It carries out the reaction L-glutaminyl-[protein] + H2O = L-glutamyl-[protein] + NH4(+). Its function is as follows. Involved in chemotaxis. Part of a chemotaxis signal transduction system that modulates chemotaxis in response to various stimuli. Catalyzes the demethylation of specific methylglutamate residues introduced into the chemoreceptors (methyl-accepting chemotaxis proteins or MCP) by CheR. Also mediates the irreversible deamidation of specific glutamine residues to glutamic acid. This Pseudomonas syringae pv. syringae (strain B728a) protein is Protein-glutamate methylesterase/protein-glutamine glutaminase 3.